A 1734-amino-acid polypeptide reads, in one-letter code: Protein TIC 214 (1734 aa).

6 helical membrane-spanning segments follow: residues Ile-19–Gly-39, Phe-68–Leu-88, Pro-91–His-111, Val-133–Leu-153, Val-176–Ile-196, and Ile-227–Ile-247. Residues Asn-1433–Gln-1485 adopt a coiled-coil conformation.

It belongs to the TIC214 family. As to quaternary structure, part of the Tic complex.

It is found in the plastid. Its subcellular location is the chloroplast inner membrane. In terms of biological role, involved in protein precursor import into chloroplasts. May be part of an intermediate translocation complex acting as a protein-conducting channel at the inner envelope. This Lepidium virginicum (Virginia pepperweed) protein is Protein TIC 214.